A 389-amino-acid chain; its full sequence is S-adenosylmethionine synthase (389 aa).

His-19 is an ATP binding site. Asp-21 contributes to the Mg(2+) binding site. Glu-47 contributes to the K(+) binding site. Residues Glu-60 and Gln-103 each contribute to the L-methionine site. The tract at residues 103-113 (QSVDIAQGVDR) is flexible loop. Residues 168–170 (DGK), 234–235 (RF), Asp-243, 249–250 (RK), Ala-266, and Lys-270 each bind ATP. Asp-243 is a binding site for L-methionine. Lys-274 is an L-methionine binding site.

It belongs to the AdoMet synthase family. In terms of assembly, homotetramer; dimer of dimers. Mg(2+) is required as a cofactor. K(+) serves as cofactor.

The protein localises to the cytoplasm. It carries out the reaction L-methionine + ATP + H2O = S-adenosyl-L-methionine + phosphate + diphosphate. It participates in amino-acid biosynthesis; S-adenosyl-L-methionine biosynthesis; S-adenosyl-L-methionine from L-methionine: step 1/1. Functionally, catalyzes the formation of S-adenosylmethionine (AdoMet) from methionine and ATP. The overall synthetic reaction is composed of two sequential steps, AdoMet formation and the subsequent tripolyphosphate hydrolysis which occurs prior to release of AdoMet from the enzyme. The polypeptide is S-adenosylmethionine synthase (Maridesulfovibrio salexigens (strain ATCC 14822 / DSM 2638 / NCIMB 8403 / VKM B-1763) (Desulfovibrio salexigens)).